Reading from the N-terminus, the 510-residue chain is Probable sphingolipid transporter spinster homolog 3 (510 aa).

A helical membrane pass occupies residues 44 to 64 (SSLSPVWLLVIFCIINLLNYM). N-linked (GlcNAc...) asparagine glycosylation is found at asparagine 75 and asparagine 98. The next 11 membrane-spanning stretches (helical) occupy residues 106–126 (VLSS…ASLA), 136–156 (VWTI…IVLC), 158–178 (MFVG…IDDN), 185–205 (AAWL…GYVY), 219–239 (FWGE…MKPL), 298–318 (VFVV…AYSY), 336–356 (IFGA…GFIL), 369–387 (LLSG…AFTL), 392–414 (GFIA…VNYV), 430–450 (ISTV…VGIV), and 462–482 (LILT…KINL).

The protein belongs to the major facilitator superfamily. Spinster (TC 2.A.1.49) family.

The protein resides in the mitochondrion inner membrane. Functionally, probable sphingolipid transporter. The sequence is that of Probable sphingolipid transporter spinster homolog 3 from Arabidopsis thaliana (Mouse-ear cress).